The following is a 202-amino-acid chain: Small ribosomal subunit protein uS4c (202 aa).

Positions 20–43 (GLTRKTTRRNSRPGQHGDQPRKPS) are disordered. Residues 90–152 (MRLDNIVFRL…ARSKQLVENY (63 aa)) form the S4 RNA-binding domain.

Belongs to the universal ribosomal protein uS4 family. In terms of assembly, part of the 30S ribosomal subunit. Contacts protein S5. The interaction surface between S4 and S5 is involved in control of translational fidelity.

Its subcellular location is the plastid. It is found in the chloroplast. One of the primary rRNA binding proteins, it binds directly to 16S rRNA where it nucleates assembly of the body of the 30S subunit. Functionally, with S5 and S12 plays an important role in translational accuracy. The protein is Small ribosomal subunit protein uS4c (rps4) of Rhodomonas salina (Cryptomonas salina).